Here is a 269-residue protein sequence, read N- to C-terminus: Hemin import ATP-binding protein HmuV (269 aa).

The 238-residue stretch at 5–242 (LDAEAASFAI…SLIRRVFDIA (238 aa)) folds into the ABC transporter domain. Residue 37 to 44 (GPNGAGKS) participates in ATP binding.

This sequence belongs to the ABC transporter superfamily. Heme (hemin) importer (TC 3.A.1.14.5) family. The complex is composed of two ATP-binding proteins (HmuV), two transmembrane proteins (HmuU) and a solute-binding protein (HmuT).

It localises to the cell inner membrane. Functionally, part of the ABC transporter complex HmuTUV involved in hemin import. Responsible for energy coupling to the transport system. The protein is Hemin import ATP-binding protein HmuV of Rhodopseudomonas palustris (strain BisB18).